The chain runs to 270 residues: Interleukin-1 alpha (270 aa).

The propeptide occupies 1–114 (MAKVPDLFED…HDLEETIQPR (114 aa)). N-linked (GlcNAc...) asparagine glycosylation is present at N46. N6-acetyllysine is present on K85. Residues 85–89 (KKRRL) are nuclear localization signal (NLS). Residue S90 is modified to Phosphoserine. A glycan (N-linked (GlcNAc...) asparagine) is linked at N139.

The protein belongs to the IL-1 family. Monomer. Interacts with TMED10; the interaction mediates the translocation from the cytoplasm into the ERGIC (endoplasmic reticulum-Golgi intermediate compartment) and thereby secretion. Interacts with IL1R1. Interacts with S100A13; this interaction is the first step in the export of IL1A, followed by direct translocation of this complex across the plasma membrane. Post-translationally, acetylated within its nuclear localization sequence, which impacts subcellular localization. Proteolytic processed by CAPN1 in a calcium-dependent manner. Cleavage from 31 kDa precursor to 18 kDa biologically active molecules. In terms of processing, phosphorylated. Phosphorylation greatly enhances susceptibility to digestion and promotes the conversion of pre-IL1A alpha to the biologically active IL1A.

It is found in the nucleus. The protein localises to the cytoplasm. It localises to the secreted. Its function is as follows. Cytokine constitutively present intracellularly in nearly all resting non-hematopoietic cells that plays an important role in inflammation and bridges the innate and adaptive immune systems. After binding to its receptor IL1R1 together with its accessory protein IL1RAP, forms the high affinity interleukin-1 receptor complex. Signaling involves the recruitment of adapter molecules such as MYD88, IRAK1 or IRAK4. In turn, mediates the activation of NF-kappa-B and the three MAPK pathways p38, p42/p44 and JNK pathways. Within the cell, acts as an alarmin and cell death results in its liberation in the extracellular space after disruption of the cell membrane to induce inflammation and alert the host to injury or damage. In addition to its role as a danger signal, which occurs when the cytokine is passively released by cell necrosis, directly senses DNA damage and acts as signal for genotoxic stress without loss of cell integrity. This chain is Interleukin-1 alpha, found in Rattus norvegicus (Rat).